The sequence spans 552 residues: MLQLNENKQFAFFQRLAFPLRIFLLILVFSIFVIAALAQYFTASFEDYLTLHVRDMAMNQAKIIASNDSVISAVKTRDYKRLATIANKLQRDTDFDYVVIGDRHSIRLYHPNPEKIGYPMQFTKQGALEKGESYFITGKGSMGMAMRAKTPIFDDDGKVIGVVSIGYLVSKIDSWRAEFLLPMAGVFVVLLGILMLLSWFLAAHIRRQMMGMEPKQIARVVRQQEALFSSVYEGLIAVDPHGYITAINRNARKMLGLSSPGRQWLGKPIVEVVRPADFFTEQIDEKRQDVVANFNGLSVIANREAIRSGDDLLGAIISFRSKDEISTLNAQLTQIKQYVESLRTLRHEHLNWMSTLNGLLQMKEYDRVLAMVQGESQAQQQLIDSLREAFADRQVAGLLFGKVQRARELGLKMIIVPGSQLSQLPPGLDSTEFAAIVGNLLDNAFEASLRSDEGNKIVELFLSDEGDDVVIEVADQGCGVPESLRDKIFEQGVSTRADEPGEHGIGLYLIASYVTRCGGVITLEDNDPCGTLFSIYIPKVKPNDSSINPIDR.

Over 1–21 (MLQLNENKQFAFFQRLAFPLR) the chain is Cytoplasmic. Residues 22-42 (IFLLILVFSIFVIAALAQYFT) form a helical membrane-spanning segment. Residues 43–182 (ASFEDYLTLH…DSWRAEFLLP (140 aa)) are Periplasmic-facing. Residues 183–203 (MAGVFVVLLGILMLLSWFLAA) traverse the membrane as a helical segment. Residues 204–552 (HIRRQMMGME…NDSSINPIDR (349 aa)) lie on the Cytoplasmic side of the membrane. The PAS domain maps to 222-292 (RQQEALFSSV…IDEKRQDVVA (71 aa)). One can recognise a Histidine kinase domain in the interval 344 to 541 (TLRHEHLNWM…LFSIYIPKVK (198 aa)). The residue at position 347 (histidine 347) is a Phosphohistidine; by autocatalysis.

Autophosphorylated.

It localises to the cell inner membrane. The catalysed reaction is ATP + protein L-histidine = ADP + protein N-phospho-L-histidine.. Its activity is regulated as follows. Autophosphorylation is induced in vitro by dithiothreitol (DTT). Functionally, member of the two-component regulatory system DpiA/DpiB, which is essential for expression of citrate-specific fermentation genes and genes involved in plasmid inheritance. Could be involved in response to both the presence of citrate and external redox conditions. Functions as a sensor kinase that phosphorylates DpiA in the presence of citrate. This is Sensor histidine kinase DpiB (dpiB) from Escherichia coli (strain K12).